A 112-amino-acid chain; its full sequence is UPF0212 protein Mboo_1659 (112 aa).

The protein belongs to the UPF0212 family.

The polypeptide is UPF0212 protein Mboo_1659 (Methanoregula boonei (strain DSM 21154 / JCM 14090 / 6A8)).